Reading from the N-terminus, the 353-residue chain is Methionine import ATP-binding protein MetN (353 aa).

Residues 6 to 249 enclose the ABC transporter domain; it reads LKNVDVDFPQ…PKQELTKKFV (244 aa). An ATP-binding site is contributed by 41–48; that stretch reads GFSGAGKS.

This sequence belongs to the ABC transporter superfamily. Methionine importer (TC 3.A.1.24) family. The complex is composed of two ATP-binding proteins (MetN), two transmembrane proteins (MetI) and a solute-binding protein (MetQ).

It localises to the cell membrane. It carries out the reaction L-methionine(out) + ATP + H2O = L-methionine(in) + ADP + phosphate + H(+). The enzyme catalyses D-methionine(out) + ATP + H2O = D-methionine(in) + ADP + phosphate + H(+). Its function is as follows. Part of the ABC transporter complex MetNIQ involved in methionine import. Responsible for energy coupling to the transport system. In Lactobacillus acidophilus (strain ATCC 700396 / NCK56 / N2 / NCFM), this protein is Methionine import ATP-binding protein MetN.